Reading from the N-terminus, the 75-residue chain is UPF0352 protein YejL (75 aa).

Belongs to the UPF0352 family.

The polypeptide is UPF0352 protein YejL (Shigella dysenteriae serotype 1 (strain Sd197)).